We begin with the raw amino-acid sequence, 782 residues long: Endonuclease MutS2 (782 aa).

336–343 contributes to the ATP binding site; sequence GPNTGGKT. A Smr domain is found at 707-782; sequence LDLRGYRYED…GFGVTVATLK (76 aa).

It belongs to the DNA mismatch repair MutS family. MutS2 subfamily. As to quaternary structure, homodimer. Binds to stalled ribosomes, contacting rRNA.

In terms of biological role, endonuclease that is involved in the suppression of homologous recombination and thus may have a key role in the control of bacterial genetic diversity. Functionally, acts as a ribosome collision sensor, splitting the ribosome into its 2 subunits. Detects stalled/collided 70S ribosomes which it binds and splits by an ATP-hydrolysis driven conformational change. Acts upstream of the ribosome quality control system (RQC), a ribosome-associated complex that mediates the extraction of incompletely synthesized nascent chains from stalled ribosomes and their subsequent degradation. Probably generates substrates for RQC. This chain is Endonuclease MutS2, found in Staphylococcus aureus (strain bovine RF122 / ET3-1).